The following is a 66-amino-acid chain: Large ribosomal subunit protein uL29 (66 aa).

Belongs to the universal ribosomal protein uL29 family.

The protein is Large ribosomal subunit protein uL29 of Bartonella tribocorum (strain CIP 105476 / IBS 506).